We begin with the raw amino-acid sequence, 96 residues long: Muconolactone Delta-isomerase 2 (96 aa).

The protein belongs to the muconolactone Delta-isomerase family. As to quaternary structure, homodecamer.

It catalyses the reaction (S)-muconolactone = (4,5-dihydro-5-oxofuran-2-yl)-acetate. Its pathway is aromatic compound metabolism; beta-ketoadipate pathway; 5-oxo-4,5-dihydro-2-furylacetate from catechol: step 3/3. The sequence is that of Muconolactone Delta-isomerase 2 (catC2) from Acinetobacter lwoffii.